Here is a 209-residue protein sequence, read N- to C-terminus: Uracil phosphoribosyltransferase (209 aa).

Residues Arg-79, Arg-104, and 131-139 (DPMLATGGS) each bind 5-phospho-alpha-D-ribose 1-diphosphate. Uracil-binding positions include Ile-194 and 199-201 (GDA). Asp-200 is a binding site for 5-phospho-alpha-D-ribose 1-diphosphate.

Belongs to the UPRTase family. It depends on Mg(2+) as a cofactor.

It carries out the reaction UMP + diphosphate = 5-phospho-alpha-D-ribose 1-diphosphate + uracil. It participates in pyrimidine metabolism; UMP biosynthesis via salvage pathway; UMP from uracil: step 1/1. Allosterically activated by GTP. Catalyzes the conversion of uracil and 5-phospho-alpha-D-ribose 1-diphosphate (PRPP) to UMP and diphosphate. This Natranaerobius thermophilus (strain ATCC BAA-1301 / DSM 18059 / JW/NM-WN-LF) protein is Uracil phosphoribosyltransferase.